We begin with the raw amino-acid sequence, 373 residues long: ATP phosphoribosyltransferase regulatory subunit (373 aa).

This sequence belongs to the class-II aminoacyl-tRNA synthetase family. HisZ subfamily. As to quaternary structure, heteromultimer composed of HisG and HisZ subunits.

It is found in the cytoplasm. The protein operates within amino-acid biosynthesis; L-histidine biosynthesis; L-histidine from 5-phospho-alpha-D-ribose 1-diphosphate: step 1/9. Functionally, required for the first step of histidine biosynthesis. May allow the feedback regulation of ATP phosphoribosyltransferase activity by histidine. The protein is ATP phosphoribosyltransferase regulatory subunit of Rhizobium johnstonii (strain DSM 114642 / LMG 32736 / 3841) (Rhizobium leguminosarum bv. viciae).